The sequence spans 264 residues: MQIVILKNSAEVAEYGANIFKKQLQSKPDSVLGLATGSTPVSLYQGLIEANKLGDISFKEVTSFNLDEYLGLAGTHPQSYRYFMNEQLFDHIDIDKANTHVPPGDAENPIQACDGYEEQIQAAGGIDIQLLGIGRNGHIGFNEPSSGLMSRTRVKTLTKATIEDNARFFKEDEYQPHLSITMGIGTILDAKKVVLLATGENKADAILATVEGALTASCPASALQLHKNAVLVIDEAAASKLSDRDFYKHIEAENQKLLARLAKS.

Asp-67 functions as the Proton acceptor; for enolization step in the catalytic mechanism. Residue Asn-136 is the For ring-opening step of the active site. The active-site Proton acceptor; for ring-opening step is His-138. The active-site For ring-opening step is Glu-143.

It belongs to the glucosamine/galactosamine-6-phosphate isomerase family. NagB subfamily. In terms of assembly, homohexamer.

It carries out the reaction alpha-D-glucosamine 6-phosphate + H2O = beta-D-fructose 6-phosphate + NH4(+). Its pathway is amino-sugar metabolism; N-acetylneuraminate degradation; D-fructose 6-phosphate from N-acetylneuraminate: step 5/5. Catalyzes the reversible isomerization-deamination of glucosamine 6-phosphate (GlcN6P) to form fructose 6-phosphate (Fru6P) and ammonium ion. This Shewanella woodyi (strain ATCC 51908 / MS32) protein is Glucosamine-6-phosphate deaminase.